A 743-amino-acid chain; its full sequence is Amylovoran biosynthesis protein AmsF (743 aa).

Residues 1–27 form the signal peptide; it reads MKRRELIRTAFSTIVATAALSSVSARA.

It to R.meliloti ExoP.

The protein resides in the periplasm. It participates in glycan metabolism; exopolysaccharide biosynthesis. Functionally, involved in the biosynthesis of amylovoran which functions as a virulence factor. May be involved in the polymerization or late modification of the repeating units. The polypeptide is Amylovoran biosynthesis protein AmsF (amsF) (Erwinia amylovora (Fire blight bacteria)).